A 161-amino-acid polypeptide reads, in one-letter code: Nucleotide-binding protein BMASAVP1_A0673 (161 aa).

It belongs to the YajQ family.

Its function is as follows. Nucleotide-binding protein. The chain is Nucleotide-binding protein BMASAVP1_A0673 from Burkholderia mallei (strain SAVP1).